The chain runs to 456 residues: MRKKWKMGGMKYIFSLLFFLLLEGGKTEQVKHSETYCMFQDKKYRVGERWHPYLEPYGLVYCVNCICSENGNVLCSRVRCPNVHCLSPVHIPHLCCPRCPDSLPPVNNKVTSKSCEYNGTTYQHGELFVAEGLFQNRQPNQCTQCSCSEGNVYCGLKTCPKLTCAFPVSVPDSCCRVCRGDGELSWEHSDGDIFRQPANREARHSYHRSHYDPPPSRQAGGLSRFPGARSHRGALMDSQQASGTIVQIVINNKHKHGQVCVSNGKTYSHGESWHPNLRAFGIVECVLCTCNVTKQECKKIHCPNRYPCKYPQKIDGKCCKVCPGKKAKELPGQSFDNKGYFCGEETMPVYESVFMEDGETTRKIALETERPPQVEVHVWTIRKGILQHFHIEKISKRMFEELPHFKLVTRTTLSQWKIFTEGEAQISQMCSSRVCRTELEDLVKVLYLERSEKGHC.

The N-terminal stretch at 1–27 (MRKKWKMGGMKYIFSLLFFLLLEGGKT) is a signal peptide. VWFC domains are found at residues 35 to 100 (TYCM…PRCP) and 113 to 179 (KSCE…RVCR). The N-linked (GlcNAc...) asparagine glycan is linked to Asn-118. The Cell attachment site motif lies at 179–181 (RGD). The tract at residues 202 to 223 (ARHSYHRSHYDPPPSRQAGGLS) is disordered. The VWFC 3 domain maps to 258–323 (QVCVSNGKTY…IDGKCCKVCP (66 aa)). The N-linked (GlcNAc...) asparagine glycan is linked to Asn-291.

In terms of tissue distribution, expressed in the developing cornea and in the eye anterior segment in addition to the retina. Differentially expressed in the fetal brain. There is high expression in cerebellum and neocortex. Expressed in retinal pericytes.

It localises to the secreted. Antagonizes the function of BMP4 by binding to it and preventing its interaction with receptors. Alters the fate commitment of neural stem cells from gliogenesis to neurogenesis. Contributes to neuronal differentiation of neural stem cells in the brain by preventing the adoption of a glial fate. May play a crucial role in dorsoventral axis formation. May play a role in embryonic bone formation. May also play an important role in regulating retinal angiogenesis through modulation of BMP4 actions in endothelial cells. Plays a role during anterior segment eye development. This is Chordin-like protein 1 (CHRDL1) from Homo sapiens (Human).